Consider the following 666-residue polypeptide: Endogenous retrovirus group K member 19 Gag polyprotein (666 aa).

The N-myristoyl glycine moiety is linked to residue Gly2. Disordered stretches follow at residues 170–189 (LVGP…AGQV) and 223–264 (PLES…GSEL). The span at 232–247 (GMPPAPQGRAPYPQPP) shows a compositional bias: pro residues. 2 consecutive CCHC-type zinc fingers follow at residues 544–561 (GKCY…NCPV) and 580–597 (DLCP…QCRS). Residues 598–640 (KFDKNGQPLSGNEQRGQPQAPQQTGAFPIQPFVPHGFQGQQPP) are disordered. Polar residues predominate over residues 604–622 (QPLSGNEQRGQPQAPQQTG).

This sequence belongs to the beta type-B retroviral Gag protein family. HERV class-II K(HML-2) gag subfamily. Myristoylation is essential for retroviral assembly. Alteration of the glycine residue leads to a block in the budding of particles and an accumulation of Gag inside the cell. In terms of processing, specific enzymatic cleavages may yield mature proteins.

It is found in the cell membrane. In terms of biological role, the products of the Gag polyproteins of infectious retroviruses perform highly complex orchestrated tasks during the assembly, budding, maturation, and infection stages of the viral replication cycle. During viral assembly, the proteins form membrane associations and self-associations that ultimately result in budding of an immature virion from the infected cell. Gag precursors also function during viral assembly to selectively bind and package two plus strands of genomic RNA. Endogenous Gag proteins may have kept, lost or modified their original function during evolution. The sequence is that of Endogenous retrovirus group K member 19 Gag polyprotein (ERVK-19) from Homo sapiens (Human).